A 177-amino-acid chain; its full sequence is 3-isopropylmalate dehydratase small subunit 1 (177 aa).

A disordered region spans residues 157–177 (GRFPGEEPGAEASTETASAAE). Residues 162-177 (EEPGAEASTETASAAE) show a composition bias toward low complexity.

It belongs to the LeuD family. LeuD type 2 subfamily. In terms of assembly, heterodimer of LeuC and LeuD.

The catalysed reaction is (2R,3S)-3-isopropylmalate = (2S)-2-isopropylmalate. The protein operates within amino-acid biosynthesis; L-leucine biosynthesis; L-leucine from 3-methyl-2-oxobutanoate: step 2/4. Catalyzes the isomerization between 2-isopropylmalate and 3-isopropylmalate, via the formation of 2-isopropylmaleate. The sequence is that of 3-isopropylmalate dehydratase small subunit 1 (leuD1) from Deinococcus radiodurans (strain ATCC 13939 / DSM 20539 / JCM 16871 / CCUG 27074 / LMG 4051 / NBRC 15346 / NCIMB 9279 / VKM B-1422 / R1).